Reading from the N-terminus, the 155-residue chain is MHPFQWCNGCFCGLGLVSTNKSCSMPPISFQDLPLNIYMVIFGTGIFVFMLSLIFCCYFISKLRNQAQSERYGYKEVVLKGDAKKLQLYGQTCAVCLEDFKGKDELGVLPCQHAFHRKCLVKWLEVRCVCPMCNKPIAGPTETSQSIGILLDELV.

Residues 40–60 form a helical membrane-spanning segment; it reads VIFGTGIFVFMLSLIFCCYFI. Residues 93 to 134 form an RING-type; atypical zinc finger; the sequence is CAVCLEDFKGKDELGVLPCQHAFHRKCLVKWLEVRCVCPMCN.

Its subcellular location is the golgi apparatus. The protein resides in the endoplasmic reticulum. It is found in the membrane. Its function is as follows. May induce necrosis and apoptosis. May play a role in cell viability. The protein is RING finger protein 122 (Rnf122) of Mus musculus (Mouse).